A 292-amino-acid chain; its full sequence is Protoheme IX farnesyltransferase (292 aa).

Helical transmembrane passes span Tyr-15 to Met-35, Phe-49 to Ile-69, Val-104 to Leu-124, Ile-147 to Val-167, Ala-171 to Leu-191, Thr-218 to Val-238, Tyr-242 to Phe-262, and Leu-271 to Val-291.

The protein belongs to the UbiA prenyltransferase family. Protoheme IX farnesyltransferase subfamily.

The protein resides in the cell inner membrane. The enzyme catalyses heme b + (2E,6E)-farnesyl diphosphate + H2O = Fe(II)-heme o + diphosphate. Its pathway is porphyrin-containing compound metabolism; heme O biosynthesis; heme O from protoheme: step 1/1. Functionally, converts heme B (protoheme IX) to heme O by substitution of the vinyl group on carbon 2 of heme B porphyrin ring with a hydroxyethyl farnesyl side group. The sequence is that of Protoheme IX farnesyltransferase from Aquifex aeolicus (strain VF5).